A 148-amino-acid chain; its full sequence is Ergosterol biosynthetic protein 28 (148 aa).

Residues 1–25 lie on the Cytoplasmic side of the membrane; sequence MFSLQDVITTTKTTLAAMPKGYLPK. A helical membrane pass occupies residues 26-46; the sequence is WLLFISIVSVFNSIQTYVSGL. Over 47 to 92 the chain is Lumenal; it reads ELTRKVYERKPTETTHLSARTFGTWTFISCVIRFYGAMYLNEPHIF. A helical transmembrane segment spans residues 93–113; it reads ELVFMSYMVALFHFGSELLIF. Residues 114–120 lie on the Cytoplasmic side of the membrane; it reads RTCKLGK. Residues 121 to 136 traverse the membrane as a helical segment; it reads GFMGPLVVSTTSLVWM. The Lumenal portion of the chain corresponds to 137 to 148; it reads YKQREYYTGVAW.

The protein belongs to the ERG28 family. As to quaternary structure, heterotetramer of ERG25, ERG26, ERG27 and ERG28. ERG28 acts as a scaffold to tether ERG27 and other 4,4-demethylation-related enzymes, forming a demethylation enzyme complex, in the endoplasmic reticulum. Interacts with ERG25, ERG26 and ERG27. Also interacts with ERG1, ERG3, ERG5, ERG6 and ERG11.

The protein localises to the endoplasmic reticulum membrane. Its function is as follows. Part of the third module of ergosterol biosynthesis pathway that includes the late steps of the pathway. ERG28 has a role as a scaffold to help anchor the catalytic components of the C-4 demethylation complex ERG25, ERG26 and ERG27 to the endoplasmic reticulum. The third module or late pathway involves the ergosterol synthesis itself through consecutive reactions that mainly occur in the endoplasmic reticulum (ER) membrane. Firstly, the squalene synthase ERG9 catalyzes the condensation of 2 farnesyl pyrophosphate moieties to form squalene, which is the precursor of all steroids. Squalene synthase is crucial for balancing the incorporation of farnesyl diphosphate (FPP) into sterol and nonsterol isoprene synthesis. Secondly, the squalene epoxidase ERG1 catalyzes the stereospecific oxidation of squalene to (S)-2,3-epoxysqualene, which is considered to be a rate-limiting enzyme in steroid biosynthesis. Then, the lanosterol synthase ERG7 catalyzes the cyclization of (S)-2,3 oxidosqualene to lanosterol, a reaction that forms the sterol core. In the next steps, lanosterol is transformed to zymosterol through a complex process involving various demethylation, reduction and desaturation reactions. The lanosterol 14-alpha-demethylase ERG11 (also known as CYP51) catalyzes C14-demethylation of lanosterol to produce 4,4'-dimethyl cholesta-8,14,24-triene-3-beta-ol, which is critical for ergosterol biosynthesis. The C-14 reductase ERG24 reduces the C14=C15 double bond of 4,4-dimethyl-cholesta-8,14,24-trienol to produce 4,4-dimethyl-cholesta-8,24-dienol. 4,4-dimethyl-cholesta-8,24-dienol is substrate of the C-4 demethylation complex ERG25-ERG26-ERG27 in which ERG25 catalyzes the three-step monooxygenation required for the demethylation of 4,4-dimethyl and 4alpha-methylsterols, ERG26 catalyzes the oxidative decarboxylation that results in a reduction of the 3-beta-hydroxy group at the C-3 carbon to an oxo group, and ERG27 is responsible for the reduction of the keto group on the C-3. ERG28 has a role as a scaffold to help anchor ERG25, ERG26 and ERG27 to the endoplasmic reticulum and ERG29 regulates the activity of the iron-containing C4-methylsterol oxidase ERG25. Then, the sterol 24-C-methyltransferase ERG6 catalyzes the methyl transfer from S-adenosyl-methionine to the C-24 of zymosterol to form fecosterol. The C-8 sterol isomerase ERG2 catalyzes the reaction which results in unsaturation at C-7 in the B ring of sterols and thus converts fecosterol to episterol. The sterol-C5-desaturase ERG3 then catalyzes the introduction of a C-5 double bond in the B ring to produce 5-dehydroepisterol. The C-22 sterol desaturase ERG5 further converts 5-dehydroepisterol into ergosta-5,7,22,24(28)-tetraen-3beta-ol by forming the C-22(23) double bond in the sterol side chain. Finally, ergosta-5,7,22,24(28)-tetraen-3beta-ol is substrate of the C-24(28) sterol reductase ERG4 to produce ergosterol. This chain is Ergosterol biosynthetic protein 28, found in Saccharomyces cerevisiae (strain ATCC 204508 / S288c) (Baker's yeast).